A 272-amino-acid chain; its full sequence is Protein STAY-GREEN 1, chloroplastic (272 aa).

The transit peptide at 1 to 50 (MGTLTTSLVVPSKLNNEQQSSIFIHKTRRKCKKNQSIVPVARLFGPAIFE) directs the protein to the chloroplast. A disordered region spans residues 201–222 (TSPSSSSGGVGGVKSTSFTSNS).

This sequence belongs to the staygreen family. Interacts with PSY1.

The protein resides in the plastid. The protein localises to the chloroplast. Its function is as follows. Required to trigger chlorophyll degradation during leaf senescence and fruit ripening. Binds directly PSY1 to regulate the accumulation of lycopene and beta-carotene in the maturing fruits. This Solanum lycopersicum (Tomato) protein is Protein STAY-GREEN 1, chloroplastic.